We begin with the raw amino-acid sequence, 289 residues long: Energy-coupling factor transporter ATP-binding protein EcfA2 (289 aa).

The 245-residue stretch at 7–251 folds into the ABC transporter domain; it reads IILDNVSYTY…IELLTKIEID (245 aa). 44–51 provides a ligand contact to ATP; it reads GTTGSGKS.

The protein belongs to the ABC transporter superfamily. Energy-coupling factor EcfA family. Forms a stable energy-coupling factor (ECF) transporter complex composed of 2 membrane-embedded substrate-binding proteins (S component), 2 ATP-binding proteins (A component) and 2 transmembrane proteins (T component).

The protein localises to the cell membrane. Its function is as follows. ATP-binding (A) component of a common energy-coupling factor (ECF) ABC-transporter complex. Unlike classic ABC transporters this ECF transporter provides the energy necessary to transport a number of different substrates. This is Energy-coupling factor transporter ATP-binding protein EcfA2 from Mycoplasma capricolum subsp. capricolum (strain California kid / ATCC 27343 / NCTC 10154).